Here is a 45-residue protein sequence, read N- to C-terminus: Photosystem II reaction center protein K (45 aa).

A propeptide spanning residues 1-8 is cleaved from the precursor; it reads MEAVLLLA. The helical transmembrane segment at 24–44 threads the bilayer; that stretch reads MPVIPLFFLALAFVWQAAVGF.

This sequence belongs to the PsbK family. PSII is composed of 1 copy each of membrane proteins PsbA, PsbB, PsbC, PsbD, PsbE, PsbF, PsbH, PsbI, PsbJ, PsbK, PsbL, PsbM, PsbT, PsbX, PsbY, PsbZ, Psb30/Ycf12, peripheral proteins PsbO, CyanoQ (PsbQ), PsbU, PsbV and a large number of cofactors. It forms dimeric complexes.

The protein resides in the cellular thylakoid membrane. One of the components of the core complex of photosystem II (PSII). PSII is a light-driven water:plastoquinone oxidoreductase that uses light energy to abstract electrons from H(2)O, generating O(2) and a proton gradient subsequently used for ATP formation. It consists of a core antenna complex that captures photons, and an electron transfer chain that converts photonic excitation into a charge separation. The chain is Photosystem II reaction center protein K from Acaryochloris marina (strain MBIC 11017).